Here is a 437-residue protein sequence, read N- to C-terminus: Nuclear hormone receptor family member nhr-100 (437 aa).

Residues 21–96 constitute a DNA-binding region (nuclear receptor); sequence DTSCLVCGDP…VGMDANAVRS (76 aa). 2 consecutive NR C4-type zinc fingers follow at residues 24-44 and 60-79; these read CLVC…CNGC and CSFN…CRAC. The region spanning 141 to 409 is the NR LBD domain; that stretch reads QTKEIIAHML…SGGGLPYDIH (269 aa).

It belongs to the nuclear hormone receptor family.

It is found in the nucleus. Its function is as follows. Orphan nuclear receptor. This chain is Nuclear hormone receptor family member nhr-100 (nhr-100), found in Caenorhabditis elegans.